Here is a 519-residue protein sequence, read N- to C-terminus: Glucose-1-phosphate adenylyltransferase large subunit 2, chloroplastic/amyloplastic (519 aa).

Belongs to the bacterial/plant glucose-1-phosphate adenylyltransferase family. Heterotetramer. In terms of tissue distribution, leaves and tubers.

It is found in the plastid. It localises to the chloroplast. The protein localises to the amyloplast. It carries out the reaction alpha-D-glucose 1-phosphate + ATP + H(+) = ADP-alpha-D-glucose + diphosphate. It participates in glycan biosynthesis; starch biosynthesis. Its activity is regulated as follows. Activated by 3'phosphoglycerate, inhibited by orthophosphate. Allosteric regulation. Its function is as follows. This protein plays a role in synthesis of starch. It catalyzes the synthesis of the activated glycosyl donor, ADP-glucose from Glc-1-P and ATP. This chain is Glucose-1-phosphate adenylyltransferase large subunit 2, chloroplastic/amyloplastic (AGPS2), found in Solanum tuberosum (Potato).